A 113-amino-acid polypeptide reads, in one-letter code: Cell division protein FtsB (113 aa).

Over 1 to 3 the chain is Cytoplasmic; it reads MRL. The chain crosses the membrane as a helical span at residues 4–21; that stretch reads ISLLLFVLLLAIQYPLWL. Residues 22-113 are Periplasmic-facing; that stretch reads GKGGWLRVWE…PNSPAATGRH (92 aa). Positions 34-63 form a coiled coil; that stretch reads HQVQEQATRNQMLKLRNAKLEGEVKDLQDG. The tract at residues 93 to 113 is disordered; the sequence is KVSATPPLPPPPNSPAATGRH.

The protein belongs to the FtsB family. In terms of assembly, part of a complex composed of FtsB, FtsL and FtsQ.

It localises to the cell inner membrane. In terms of biological role, essential cell division protein. May link together the upstream cell division proteins, which are predominantly cytoplasmic, with the downstream cell division proteins, which are predominantly periplasmic. The polypeptide is Cell division protein FtsB (Cupriavidus pinatubonensis (strain JMP 134 / LMG 1197) (Cupriavidus necator (strain JMP 134))).